Here is a 233-residue protein sequence, read N- to C-terminus: tRNA (guanine-N(1)-)-methyltransferase (233 aa).

S-adenosyl-L-methionine contacts are provided by residues Gly-110 and Ile-130–Met-135.

The protein belongs to the RNA methyltransferase TrmD family. As to quaternary structure, homodimer.

It localises to the cytoplasm. The enzyme catalyses guanosine(37) in tRNA + S-adenosyl-L-methionine = N(1)-methylguanosine(37) in tRNA + S-adenosyl-L-homocysteine + H(+). Functionally, specifically methylates guanosine-37 in various tRNAs. This chain is tRNA (guanine-N(1)-)-methyltransferase, found in Finegoldia magna (strain ATCC 29328 / DSM 20472 / WAL 2508) (Peptostreptococcus magnus).